The primary structure comprises 128 residues: Putative pre-16S rRNA nuclease (128 aa).

This sequence belongs to the YqgF nuclease family.

Its subcellular location is the cytoplasm. Could be a nuclease involved in processing of the 5'-end of pre-16S rRNA. The protein is Putative pre-16S rRNA nuclease of Campylobacter lari (strain RM2100 / D67 / ATCC BAA-1060).